Consider the following 180-residue polypeptide: MLYTRLLRHNSQFTKFSGTSPNLGSKPLFSKGNLYTSLLVTTLYGTGLACLYLESNSLNKSKEQEDPHAIAEDDIVNIVHDAPNRIFKPALDTYQEKELDLQKSDLHKVLHSLTYSDVSQFSIVWGFLIQLSSLIGNSTLGKKSILYKGSVVSVLGFPPLIYMALKLRMKQLEKAGVRFE.

3 consecutive transmembrane segments (helical) span residues 34–54 (LYTS…LYLE), 121–141 (FSIV…STLG), and 145–165 (ILYK…YMAL).

It is found in the mitochondrion membrane. This Saccharomyces cerevisiae (strain ATCC 204508 / S288c) (Baker's yeast) protein is Mitochondrial membrane protein FMP33 (FMP33).